The sequence spans 476 residues: Serine/threonine-protein kinase sax-1 (476 aa).

A Protein kinase domain is found at Phe-87–Val-381. ATP contacts are provided by residues Ile-93–Val-101 and Lys-116. Asp-210 acts as the Proton acceptor in catalysis. In terms of domain architecture, AGC-kinase C-terminal spans Lys-382 to Met-452.

It belongs to the protein kinase superfamily. AGC Ser/Thr protein kinase family. The cofactor is Mg(2+). As to expression, widely expressed in embryonic and larval neurons that contribute axons to the nerve ring and in hypodermal cells, including lateral seam cells. Also displays a punctate localization in muscle.

The protein localises to the cytoplasm. The protein resides in the nucleus. It catalyses the reaction L-seryl-[protein] + ATP = O-phospho-L-seryl-[protein] + ADP + H(+). The catalysed reaction is L-threonyl-[protein] + ATP = O-phospho-L-threonyl-[protein] + ADP + H(+). In terms of biological role, acts with sax-2 to restrict the growth of both primary and secondary neurites. Regulates mechanosensory tiling by controlling the termination point of sensory dendrites. This Caenorhabditis elegans protein is Serine/threonine-protein kinase sax-1.